The sequence spans 232 residues: tRNA pseudouridine synthase B (232 aa).

The active-site Nucleophile is Asp-53.

It belongs to the pseudouridine synthase TruB family. Type 1 subfamily.

The catalysed reaction is uridine(55) in tRNA = pseudouridine(55) in tRNA. Its function is as follows. Responsible for synthesis of pseudouridine from uracil-55 in the psi GC loop of transfer RNAs. The polypeptide is tRNA pseudouridine synthase B (Malacoplasma penetrans (strain HF-2) (Mycoplasma penetrans)).